A 176-amino-acid chain; its full sequence is Translation initiation factor IF-3 (176 aa).

It belongs to the IF-3 family. As to quaternary structure, monomer.

It localises to the cytoplasm. Functionally, IF-3 binds to the 30S ribosomal subunit and shifts the equilibrium between 70S ribosomes and their 50S and 30S subunits in favor of the free subunits, thus enhancing the availability of 30S subunits on which protein synthesis initiation begins. This Rippkaea orientalis (strain PCC 8801 / RF-1) (Cyanothece sp. (strain PCC 8801)) protein is Translation initiation factor IF-3.